The sequence spans 212 residues: Peptide methionine sulfoxide reductase MsrA (212 aa).

C52 is a catalytic residue.

The protein belongs to the MsrA Met sulfoxide reductase family.

The enzyme catalyses L-methionyl-[protein] + [thioredoxin]-disulfide + H2O = L-methionyl-(S)-S-oxide-[protein] + [thioredoxin]-dithiol. It carries out the reaction [thioredoxin]-disulfide + L-methionine + H2O = L-methionine (S)-S-oxide + [thioredoxin]-dithiol. Functionally, has an important function as a repair enzyme for proteins that have been inactivated by oxidation. Catalyzes the reversible oxidation-reduction of methionine sulfoxide in proteins to methionine. The protein is Peptide methionine sulfoxide reductase MsrA of Salmonella newport (strain SL254).